Reading from the N-terminus, the 374-residue chain is tRNA-specific 2-thiouridylase MnmA (374 aa).

ATP is bound by residues 12–19 and Met-38; that span reads GMSGGVDS. An interaction with target base in tRNA region spans residues 98-100; that stretch reads NPD. Cys-103 acts as the Nucleophile in catalysis. Cys-103 and Cys-207 form a disulfide bridge. Residue Gly-128 coordinates ATP. The segment at 157 to 159 is interaction with tRNA; sequence KDQ. The active-site Cysteine persulfide intermediate is Cys-207. Residues 321-322 form an interaction with tRNA region; sequence RY.

This sequence belongs to the MnmA/TRMU family.

The protein localises to the cytoplasm. It carries out the reaction S-sulfanyl-L-cysteinyl-[protein] + uridine(34) in tRNA + AH2 + ATP = 2-thiouridine(34) in tRNA + L-cysteinyl-[protein] + A + AMP + diphosphate + H(+). Catalyzes the 2-thiolation of uridine at the wobble position (U34) of tRNA, leading to the formation of s(2)U34. In Aliivibrio fischeri (strain MJ11) (Vibrio fischeri), this protein is tRNA-specific 2-thiouridylase MnmA.